The sequence spans 242 residues: Orotidine 5'-phosphate decarboxylase (242 aa).

Substrate-binding positions include aspartate 22, lysine 44, 71–80, threonine 130, arginine 190, glutamine 199, glycine 219, and arginine 220; that span reads DLKYHDIPNT. Residue lysine 73 is the Proton donor of the active site.

This sequence belongs to the OMP decarboxylase family. Type 1 subfamily. Homodimer.

The enzyme catalyses orotidine 5'-phosphate + H(+) = UMP + CO2. Its pathway is pyrimidine metabolism; UMP biosynthesis via de novo pathway; UMP from orotate: step 2/2. Catalyzes the decarboxylation of orotidine 5'-monophosphate (OMP) to uridine 5'-monophosphate (UMP). The protein is Orotidine 5'-phosphate decarboxylase of Laribacter hongkongensis (strain HLHK9).